The chain runs to 120 residues: Large ribosomal subunit protein uL18 (120 aa).

Belongs to the universal ribosomal protein uL18 family. Part of the 50S ribosomal subunit; part of the 5S rRNA/L5/L18/L25 subcomplex. Contacts the 5S and 23S rRNAs.

Functionally, this is one of the proteins that bind and probably mediate the attachment of the 5S RNA into the large ribosomal subunit, where it forms part of the central protuberance. The sequence is that of Large ribosomal subunit protein uL18 from Geobacillus thermodenitrificans (strain NG80-2).